Consider the following 645-residue polypeptide: Threonine--tRNA ligase (645 aa).

The TGS domain occupies 1 to 61; it reads MPAITLPDGS…SSDASVKFIT (61 aa). The segment at 243–536 is catalytic; it reads DHRRIGREMD…LIEQYAGKFP (294 aa). Residues C336, H387, and H513 each contribute to the Zn(2+) site.

Belongs to the class-II aminoacyl-tRNA synthetase family. Homodimer. Zn(2+) serves as cofactor.

Its subcellular location is the cytoplasm. It carries out the reaction tRNA(Thr) + L-threonine + ATP = L-threonyl-tRNA(Thr) + AMP + diphosphate + H(+). Functionally, catalyzes the attachment of threonine to tRNA(Thr) in a two-step reaction: L-threonine is first activated by ATP to form Thr-AMP and then transferred to the acceptor end of tRNA(Thr). Also edits incorrectly charged L-seryl-tRNA(Thr). The polypeptide is Threonine--tRNA ligase (Gluconobacter oxydans (strain 621H) (Gluconobacter suboxydans)).